Here is a 1077-residue protein sequence, read N- to C-terminus: Response regulator SSK1 (1077 aa).

In terms of domain architecture, Response regulatory spans 854–1000 (NVLIVEDNII…FLERKVMEWG (147 aa)). Position 903 is a 4-aspartylphosphate (aspartate 903).

This sequence belongs to the SSK1 family.

The protein resides in the cytoplasm. In terms of biological role, two-domain response regulator protein in the two-component signal transduction system of the HOG1 pathway. Involved in multi-stress responses and is essential for conidiation, secondary metabolism, autophagy and endocyrosis. In addition, regulates mycelial growth, cell nucleus development, septum formation, and organelle development. Also regulates trap formation and thus plays a crucial role in pathogenicity. The protein is Response regulator SSK1 of Arthrobotrys oligospora (strain ATCC 24927 / CBS 115.81 / DSM 1491) (Nematode-trapping fungus).